The sequence spans 543 residues: Glucose-6-phosphate isomerase (543 aa).

The Proton donor role is filled by Glu-353. Active-site residues include His-384 and Lys-512.

Belongs to the GPI family.

The protein resides in the cytoplasm. The catalysed reaction is alpha-D-glucose 6-phosphate = beta-D-fructose 6-phosphate. Its pathway is carbohydrate biosynthesis; gluconeogenesis. It functions in the pathway carbohydrate degradation; glycolysis; D-glyceraldehyde 3-phosphate and glycerone phosphate from D-glucose: step 2/4. Catalyzes the reversible isomerization of glucose-6-phosphate to fructose-6-phosphate. The sequence is that of Glucose-6-phosphate isomerase from Christiangramia forsetii (strain DSM 17595 / CGMCC 1.15422 / KT0803) (Gramella forsetii).